A 373-amino-acid polypeptide reads, in one-letter code: Dual-specificity RNA methyltransferase RlmN (373 aa).

Residue Glu101 is the Proton acceptor of the active site. Positions 107 to 350 constitute a Radical SAM core domain; the sequence is ENKRTTLCVS…TIIRKIRGAD (244 aa). Residues Cys114 and Cys355 are joined by a disulfide bond. [4Fe-4S] cluster is bound by residues Cys121, Cys125, and Cys128. S-adenosyl-L-methionine contacts are provided by residues 179-180, Ser211, 233-235, and Asn312; these read GE and SLH. The S-methylcysteine intermediate role is filled by Cys355.

This sequence belongs to the radical SAM superfamily. RlmN family. The cofactor is [4Fe-4S] cluster.

It localises to the cytoplasm. The catalysed reaction is adenosine(2503) in 23S rRNA + 2 reduced [2Fe-2S]-[ferredoxin] + 2 S-adenosyl-L-methionine = 2-methyladenosine(2503) in 23S rRNA + 5'-deoxyadenosine + L-methionine + 2 oxidized [2Fe-2S]-[ferredoxin] + S-adenosyl-L-homocysteine. The enzyme catalyses adenosine(37) in tRNA + 2 reduced [2Fe-2S]-[ferredoxin] + 2 S-adenosyl-L-methionine = 2-methyladenosine(37) in tRNA + 5'-deoxyadenosine + L-methionine + 2 oxidized [2Fe-2S]-[ferredoxin] + S-adenosyl-L-homocysteine. Specifically methylates position 2 of adenine 2503 in 23S rRNA and position 2 of adenine 37 in tRNAs. m2A2503 modification seems to play a crucial role in the proofreading step occurring at the peptidyl transferase center and thus would serve to optimize ribosomal fidelity. The polypeptide is Dual-specificity RNA methyltransferase RlmN (Blochmanniella pennsylvanica (strain BPEN)).